Here is a 389-residue protein sequence, read N- to C-terminus: Tubby-like F-box protein 11 (389 aa).

In terms of domain architecture, F-box spans 36–82 (DYRWSEIPEELLREILIRVEAADGGGWPSRRSVVACAGVCRGWRLLM). A disordered region spans residues 250–289 (STMEPQGVASEPSEFPLLGTRSTLSRSQSKPLRSSSSHLK). Low complexity predominate over residues 273–286 (LSRSQSKPLRSSSS).

The protein belongs to the TUB family. In terms of tissue distribution, ubiquitous.

The protein is Tubby-like F-box protein 11 of Arabidopsis thaliana (Mouse-ear cress).